A 112-amino-acid chain; its full sequence is MRLLSSRAARVSGPSGSLCALLALLLLTPPGPLASAGPVAAVVRELRCVCLTTTPGIHPKTVSDLQVIAAGPQCSKVEVIATLKNGREVCLDPEAPLIKKIVQKILDSGKNN.

The signal sequence occupies residues 1–36; sequence MRLLSSRAARVSGPSGSLCALLALLLLTPPGPLASA. Disulfide bonds link C48/C74 and C50/C90.

This sequence belongs to the intercrine alpha (chemokine CxC) family.

It is found in the secreted. In terms of biological role, chemotactic for neutrophil granulocytes. Signals through binding and activation of its receptors (CXCR1 and CXCR2). In addition to its chemotactic and angiogenic properties, it has strong antibacterial activity against Gram-positive and Gram-negative bacteria (90-fold-higher when compared to CXCL5 and CXCL7). This Bos taurus (Bovine) protein is C-X-C motif chemokine 6 (CXCL6).